The following is a 374-amino-acid chain: Alcohol dehydrogenase class-3 (374 aa).

The residue at position 2 (Ala-2) is an N-acetylalanine. Positions 45, 67, 97, 100, 103, 111, and 174 each coordinate Zn(2+). Position 233 is an N6-succinyllysine (Lys-233). Ser-247 is subject to Phosphoserine. Position 315 is an N6-succinyllysine (Lys-315). 2 positions are modified to phosphoserine: Ser-324 and Ser-351.

Belongs to the zinc-containing alcohol dehydrogenase family. Class-III subfamily. As to quaternary structure, homodimer. The cofactor is Zn(2+). In terms of tissue distribution, ubiquitous.

The protein resides in the cytoplasm. The enzyme catalyses a primary alcohol + NAD(+) = an aldehyde + NADH + H(+). It carries out the reaction a secondary alcohol + NAD(+) = a ketone + NADH + H(+). The catalysed reaction is S-(hydroxymethyl)glutathione + NADP(+) = S-formylglutathione + NADPH + H(+). It catalyses the reaction S-(hydroxymethyl)glutathione + NAD(+) = S-formylglutathione + NADH + H(+). The enzyme catalyses 20-oxo-(5Z,8Z,11Z,14Z)-eicosatetraenoate + NAD(+) + H2O = (5Z,8Z,11Z,14Z)-eicosatetraenedioate + NADH + 2 H(+). It carries out the reaction 20-hydroxy-(5Z,8Z,11Z,14Z)-eicosatetraenoate + NAD(+) = 20-oxo-(5Z,8Z,11Z,14Z)-eicosatetraenoate + NADH + H(+). The catalysed reaction is S-nitrosoglutathione + NADH + H(+) = S-(hydroxysulfenamide)glutathione + NAD(+). In terms of biological role, catalyzes the oxidation of long-chain primary alcohols and the oxidation of S-(hydroxymethyl) glutathione. Also oxidizes long chain omega-hydroxy fatty acids, such as 20-HETE, producing both the intermediate aldehyde, 20-oxoarachidonate and the end product, a dicarboxylic acid, (5Z,8Z,11Z,14Z)-eicosatetraenedioate. Class-III ADH is remarkably ineffective in oxidizing ethanol. Required for clearance of cellular formaldehyde, a cytotoxic and carcinogenic metabolite that induces DNA damage. Also acts as a S-nitroso-glutathione reductase by catalyzing the NADH-dependent reduction of S-nitrosoglutathione, thereby regulating protein S-nitrosylation. This is Alcohol dehydrogenase class-3 from Mus musculus (Mouse).